The sequence spans 123 residues: Small ribosomal subunit protein eS8 (123 aa).

The segment at 1-38 (MKDQGRSPRKRTGGRRRPNHKKKKHELGKDTVETQVGE) is disordered. The span at 7-26 (SPRKRTGGRRRPNHKKKKHE) shows a compositional bias: basic residues.

As to quaternary structure, part of the 30S ribosomal subunit.

The sequence is that of Small ribosomal subunit protein eS8 (rps8e) from Haloarcula marismortui (strain ATCC 43049 / DSM 3752 / JCM 8966 / VKM B-1809) (Halobacterium marismortui).